A 221-amino-acid chain; its full sequence is Interleukin-12 subunit alpha (221 aa).

The first 25 residues, 1 to 25 (MCPLRSLLLISTLVLLHHLPHLSLG), serve as a signal peptide directing secretion. Disulfide bonds link Cys39/Cys112, Cys66/Cys198, and Cys87/Cys125. The N-linked (GlcNAc...) asparagine glycan is linked to Asn95.

The protein belongs to the IL-6 superfamily. In terms of assembly, heterodimer with IL12B; disulfide-linked. This heterodimer is known as interleukin IL-12. Heterodimer with EBI3/IL27B; not disulfide-linked. This heterodimer is known as interleukin IL-35. Interacts with NBR1; this interaction promotes IL-12 secretion.

The protein resides in the secreted. Its function is as follows. Heterodimerizes with IL12B to form the IL-12 cytokine or with EBI3/IL27B to form the IL-35 cytokine. IL-12 is primarily produced by professional antigen-presenting cells (APCs) such as B-cells and dendritic cells (DCs) as well as macrophages and granulocytes and regulates T-cell and natural killer-cell responses, induces the production of interferon-gamma (IFN-gamma), favors the differentiation of T-helper 1 (Th1) cells and is an important link between innate resistance and adaptive immunity. Mechanistically, exerts its biological effects through a receptor composed of IL12R1 and IL12R2 subunits. Binding to the receptor results in the rapid tyrosine phosphorylation of a number of cellular substrates including the JAK family kinases TYK2 and JAK2. In turn, recruited STAT4 gets phosphorylated and translocates to the nucleus where it regulates cytokine/growth factor responsive genes. As part of IL-35, plays essential roles in maintaining the immune homeostasis of the liver microenvironment and also functions as an immune-suppressive cytokine. Mediates biological events through unconventional receptors composed of IL12RB2 and gp130/IL6ST heterodimers or homodimers. Signaling requires the transcription factors STAT1 and STAT4, which form a unique heterodimer that binds to distinct DNA sites. This Bubalus carabanensis (Swamp type water buffalo) protein is Interleukin-12 subunit alpha (IL12A).